The primary structure comprises 1079 residues: MEQQQQKSAVHVSKLFVCTAVDCKDEIEEKFERSYASLQQQIAGLSDKEMHDMLTQFVCKEKQHEEISIGFLYIILTDPAMAPKTYRDITLVSRDGMNVIVANLTLLVAEKYTKLTETARRQLIWVLREFVKHQVLSVENVIWNCLRQAGGGDVSHKNLFLVESLLDIFIEYRAWLETNPFLVQSSVYSFVRLIEDHANPALISLRQKEVKFTISLIRDRFHDIIPLGRDFVRLLQNVARIPEFEQLWRDILYNPKSLHPTFNGIWHLLQIRTSRRFLQCRLLPEMERKLHFLASSVKFGNQKRYQDWFQDKYFATPESHSLRSDLIRFIINVIHPTNDMLCSDIIPRWAIIGWLISSCTNPIASANAKLSLFYDWLFFDPAKDNIMNIEPGILVMYHSIRNHPFVSSTLLDFLCRITKNFYIKNEDKIRLGVYNSLKLILDKQVIPNLHPLFESPKLDRELRNLIRENFREFVSPVSNMPQTMYPATHSIQAPIFKKEADQRITQIENIDVGAGVLAANSSTISLVDDDSKVATIPTESLERETEAVFSDEDGENLGRCTKNEENTDDDDDLPLSKVRLKEKPVPEKVELPEAIAESFEIFVTKRNSFTWEAFLKDFRTLPASTLDETQLNYVISNTVLILRETLPQQNVFSESKTEEKCLAKSISYPLYGLFRFLYENEDKSKKPFQSLLSEICERLSETGYLLLYFMKIHCKLQTRKNAQQSYQFKTTVYRQICEATDGKIASCLVRDLDLLEKENTTIYLWLLPDIYREFKTIAINNTDLLRITLRCVDAKNVRDIMYSIAQGKMTIFKQDGLIECIRESLEYETYEQFCLWQLIQAHDVPLKCIQDILPELEAANHPEALSHLLLLLKNEEPTNEIIRLLLSREAKSRGDPFVTSALRFWCQRCEEKLSEIIASLLTSKYPSSSPNKRKRPSKGSSAASSTPSADHVLNHLEHYRRSCRHGTGTGLYVHDMMQRALQSAYTHSNESTKKQFSDLFALAAEDETTAVGRRGGSGRGRKQPAGKKDSNNHSAGSKKNSDVVKAIYSSDESSSEEDWSKHKITQAAKKRKKAINDSD.

Disordered regions lie at residues 544-574 (ETEA…DDLP), 925-949 (YPSS…TPSA), and 1010-1079 (AVGR…NDSD). The span at 938 to 949 (KGSSAASSTPSA) shows a compositional bias: low complexity. Residues serine 1049, serine 1050, serine 1054, and serine 1055 each carry the phosphoserine modification. Over residues 1062-1073 (HKITQAAKKRKK) the composition is skewed to basic residues.

The protein belongs to the Integrator subunit 3 family. In terms of assembly, belongs to the multiprotein complex Integrator, at least composed of IntS1, IntS2, IntS3, IntS4, omd/IntS5, IntS6, defl/IntS7, IntS8, IntS9, IntS10, IntS11, IntS12, asun/IntS13, IntS14 and IntS15. The core complex associates with protein phosphatase 2A subunits mts/PP2A and Pp2A-29B, to form the Integrator-PP2A (INTAC) complex.

It is found in the nucleus. The protein localises to the cytoplasm. Functionally, component of the integrator complex, a multiprotein complex that terminates RNA polymerase II (Pol II) transcription in the promoter-proximal region of genes. The integrator complex provides a quality checkpoint during transcription elongation by driving premature transcription termination of transcripts that are unfavorably configured for transcriptional elongation: the complex terminates transcription by (1) catalyzing dephosphorylation of the C-terminal domain (CTD) of Pol II subunit Polr2A/Rbp1 and Spt5, and (2) degrading the exiting nascent RNA transcript via endonuclease activity. The integrator complex is also involved in the 3'-end processing of the U7 snRNA, and also the spliceosomal snRNAs U1, U2, U4 and U5. The sequence is that of Integrator complex subunit 3 homolog (IntS3) from Drosophila mojavensis (Fruit fly).